A 238-amino-acid polypeptide reads, in one-letter code: tRNA (guanine-N(7)-)-methyltransferase (238 aa).

Residues glutamate 68, glutamate 93, aspartate 120, and aspartate 143 each coordinate S-adenosyl-L-methionine. Aspartate 143 is a catalytic residue. Substrate is bound by residues lysine 147, aspartate 179, and 216–219 (TKFE).

It belongs to the class I-like SAM-binding methyltransferase superfamily. TrmB family.

It catalyses the reaction guanosine(46) in tRNA + S-adenosyl-L-methionine = N(7)-methylguanosine(46) in tRNA + S-adenosyl-L-homocysteine. Its pathway is tRNA modification; N(7)-methylguanine-tRNA biosynthesis. Its function is as follows. Catalyzes the formation of N(7)-methylguanine at position 46 (m7G46) in tRNA. The protein is tRNA (guanine-N(7)-)-methyltransferase of Aliivibrio fischeri (strain MJ11) (Vibrio fischeri).